The following is a 219-amino-acid chain: MSLVPEHGNVYVLNQTNQLKGLFTIIRDKTKPRSEFIFYANRIIRLIVEEGLNHLPVSSAKVTTAQNAEYEGVMFDGRICGVSIMRAGESMEQGLRECCRSVRIGKILIQRDEETHKPVLHYIKLPEDISKRYVLLLDPMLATGGSAICAMEILINMGCKQEQIIFLNVIASPEGLKNVHDRFPNIRIVTAVIDEGLDNNGYIVPGLGDFGDIYFGTKA.

GTP-binding positions include Arg-33, Arg-42, and 76–79 (DGRI). Arg-86 serves as a coordination point for 5-phospho-alpha-D-ribose 1-diphosphate. Arg-103 provides a ligand contact to GTP. Arg-111 is a 5-phospho-alpha-D-ribose 1-diphosphate binding site. Arg-132 contributes to the GTP binding site. 5-phospho-alpha-D-ribose 1-diphosphate-binding positions include Asp-138 and 138-146 (DPMLATGGS). Residue Tyr-202 participates in D-ribose 5-phosphate binding. Uracil is bound by residues Ile-203 and 208–210 (GDF). Residue Asp-209 coordinates 5-phospho-alpha-D-ribose 1-diphosphate.

Belongs to the UPRTase family. Mg(2+) is required as a cofactor.

It catalyses the reaction UMP + diphosphate = 5-phospho-alpha-D-ribose 1-diphosphate + uracil. It functions in the pathway pyrimidine metabolism; UMP biosynthesis via salvage pathway; UMP from uracil: step 1/1. Allosterically activated by GTP. Its function is as follows. Catalyzes the conversion of uracil and 5-phospho-alpha-D-ribose 1-diphosphate (PRPP) to UMP and diphosphate. This Schizosaccharomyces pombe (strain 972 / ATCC 24843) (Fission yeast) protein is Uracil phosphoribosyltransferase 1.